A 1012-amino-acid chain; its full sequence is Formate dehydrogenase subunit alpha (1012 aa).

Residues 1–35 constitute a signal peptide (tat-type signal); the sequence is MLIKRRAFLKLTAAGATLSAFGGLGVDLAPAKAQA. The region spanning 45 to 103 is the 4Fe-4S Mo/W bis-MGD-type domain; sequence AKQTTSVCCYCSVGCGLIVHTDKKTNRAINVEGDPDHPINEGSLCAKGASTWQLAENER. 4 residues coordinate [4Fe-4S] cluster: Cys-52, Cys-55, Cys-59, and Cys-89. W-bis(molybdopterin guanine dinucleotide) is bound at residue Sec-193. Sec-193 is a non-standard amino acid (selenocysteine). Residues Thr-393, Lys-395, Lys-398, Leu-428, and Asn-430 each contribute to the Ca(2+) site. A disulfide bridge links Cys-852 with Cys-879.

It belongs to the prokaryotic molybdopterin-containing oxidoreductase family. As to quaternary structure, heterodimer of alpha (FdhA) and beta (FdhB) subunits. [4Fe-4S] cluster serves as cofactor. W-bis(molybdopterin guanine dinucleotide) is required as a cofactor. The disulfide bond is likely to be broken in the active form of this enzyme. Post-translationally, predicted to be exported by the Tat system. The position of the signal peptide cleavage has been experimentally proven.

It localises to the periplasm. The catalysed reaction is formate + NAD(+) = CO2 + NADH. In terms of biological role, alpha chain of the formate dehydrogenase (FDH) catalyze the reversible two-electron oxidation of formate to carbon dioxide. FDH loses activity in the presence of air, but this activity can be restored. The alpha subunit of formate dehydrogenase forms the active site. The chain is Formate dehydrogenase subunit alpha from Megalodesulfovibrio gigas (Desulfovibrio gigas).